The following is a 277-amino-acid chain: MKRKPAVAGLFYPSRRDELVEQIRICFLDKRIGPGELPDPSETKLQSPIGFVSPHAGYIYSGPVAAWGFLEVAKFGEPSVVVIIGPNHTGLGRPVGVWPEGEWETPLGTVPVNQRAAEIILNSSRYAEEDFMSHIREHSIEVQIPFLQFVFGDVSIVPICLMDQSPAVAEDLANALTKLVAEFPSVLIIASTDLNHYEDQRTTLRKDSYIMEAIRNKDPRLLYEYLVKEDISMCGYGGVATLLNMNFKNARILKHATSGDVSGDKLEVVGYLSAILF.

Belongs to the MEMO1 family.

The polypeptide is MEMO1 family protein Tpet_0837 (Thermotoga petrophila (strain ATCC BAA-488 / DSM 13995 / JCM 10881 / RKU-1)).